Consider the following 127-residue polypeptide: Large ribosomal subunit protein bL20 (127 aa).

The protein belongs to the bacterial ribosomal protein bL20 family.

In terms of biological role, binds directly to 23S ribosomal RNA and is necessary for the in vitro assembly process of the 50S ribosomal subunit. It is not involved in the protein synthesizing functions of that subunit. This is Large ribosomal subunit protein bL20 from Renibacterium salmoninarum (strain ATCC 33209 / DSM 20767 / JCM 11484 / NBRC 15589 / NCIMB 2235).